Consider the following 691-residue polypeptide: DNA ligase (691 aa).

NAD(+) is bound by residues 41–45 (DAEYD), 90–91 (SL), and Glu130. Lys132 serves as the catalytic N6-AMP-lysine intermediate. NAD(+) contacts are provided by Arg153, Glu190, Lys307, and Lys331. Positions 425, 428, 443, and 449 each coordinate Zn(2+). Residues 610-691 (APQGVLAGKT…MHTLLEGHAR (82 aa)) enclose the BRCT domain.

This sequence belongs to the NAD-dependent DNA ligase family. LigA subfamily. Requires Mg(2+) as cofactor. Mn(2+) is required as a cofactor.

The catalysed reaction is NAD(+) + (deoxyribonucleotide)n-3'-hydroxyl + 5'-phospho-(deoxyribonucleotide)m = (deoxyribonucleotide)n+m + AMP + beta-nicotinamide D-nucleotide.. DNA ligase that catalyzes the formation of phosphodiester linkages between 5'-phosphoryl and 3'-hydroxyl groups in double-stranded DNA using NAD as a coenzyme and as the energy source for the reaction. It is essential for DNA replication and repair of damaged DNA. In Burkholderia pseudomallei (strain 1710b), this protein is DNA ligase.